The chain runs to 274 residues: ATP synthase subunit a (274 aa).

5 helical membrane-spanning segments follow: residues 43–63 (TLNI…LLVF), 103–123 (VIAP…MMDL), 149–169 (DVSI…FYSI), 223–243 (LIFI…LSVP), and 245–265 (AIFH…LTIV).

It belongs to the ATPase A chain family. F-type ATPases have 2 components, CF(1) - the catalytic core - and CF(0) - the membrane proton channel. CF(1) has five subunits: alpha(3), beta(3), gamma(1), delta(1), epsilon(1). CF(0) has three main subunits: a(1), b(2) and c(9-12). The alpha and beta chains form an alternating ring which encloses part of the gamma chain. CF(1) is attached to CF(0) by a central stalk formed by the gamma and epsilon chains, while a peripheral stalk is formed by the delta and b chains.

It localises to the cell inner membrane. Its function is as follows. Key component of the proton channel; it plays a direct role in the translocation of protons across the membrane. The chain is ATP synthase subunit a from Yersinia pestis bv. Antiqua (strain Angola).